A 432-amino-acid polypeptide reads, in one-letter code: CinA-like protein (432 aa).

Belongs to the CinA family.

The chain is CinA-like protein from Colwellia psychrerythraea (strain 34H / ATCC BAA-681) (Vibrio psychroerythus).